The chain runs to 237 residues: uncharacterized protein (237 aa).

The tract at residues 213-237 is disordered; the sequence is GQGKYLKLDSNTTENKTTKQNETGG. A compositionally biased stretch (low complexity) spans 223–237; that stretch reads NTTENKTTKQNETGG.

This is an uncharacterized protein from Methanothermobacter thermautotrophicus (Methanobacterium thermoformicicum).